We begin with the raw amino-acid sequence, 68 residues long: UPF0352 protein CPS_2611 (68 aa).

Belongs to the UPF0352 family.

The polypeptide is UPF0352 protein CPS_2611 (Colwellia psychrerythraea (strain 34H / ATCC BAA-681) (Vibrio psychroerythus)).